The chain runs to 471 residues: Alpha-galactosidase (471 aa).

The N-terminal stretch at 1–18 (MSYIYLFITAAAVTGALG) is a signal peptide. A disulfide bridge connects residues Cys42 and Cys74. Substrate is bound by residues Asp72 and Asp73. N-linked (GlcNAc...) asparagine glycosylation is present at Asn82. A disulfide bridge links Cys121 with Cys151. Lys147 contacts substrate. The active-site Nucleophile is the Asp149. Asn175 is a glycosylation site (N-linked (GlcNAc...) asparagine). Substrate is bound at residue Arg205. The active-site Proton donor is the Asp209. Intrachain disulfides connect Cys221–Cys237 and Cys223–Cys230. Gln251 lines the substrate pocket. N-linked (GlcNAc...) asparagine glycosylation is found at Asn270, Asn361, Asn370, Asn417, Asn422, Asn435, and Asn454.

The protein belongs to the glycosyl hydrolase 27 family. In terms of assembly, homotetramer.

The protein localises to the secreted. The catalysed reaction is Hydrolysis of terminal, non-reducing alpha-D-galactose residues in alpha-D-galactosides, including galactose oligosaccharides, galactomannans and galactolipids.. In Saccharomyces mikatae (Yeast), this protein is Alpha-galactosidase (MEL).